Reading from the N-terminus, the 324-residue chain is Chlorophyllase-1 (324 aa).

Residues 136–140 (GHSRG) carry the GXSXG motif. Serine 138 serves as the catalytic Nucleophile. Active-site charge relay system residues include aspartate 168 and histidine 243.

It belongs to the AB hydrolase superfamily. Lipase family. Expressed in seedlings, leaves, flowers and siliques, but not in roots.

Its subcellular location is the cytoplasm. It is found in the cytosol. The catalysed reaction is a chlorophyll + H2O = a chlorophyllide + phytol + H(+). It carries out the reaction chlorophyll a + H2O = phytol + chlorophyllide a + H(+). The protein operates within porphyrin-containing compound metabolism; chlorophyll degradation. Functionally, catalyzes the hydrolysis of ester bond in chlorophyll to yield chlorophyllide and phytol. Shows a preferential activity toward chlorophyll a. Does not seem to be required for chlorophyll degradation during senescence. May modulate the balance between different plant defense pathways. The chain is Chlorophyllase-1 from Arabidopsis thaliana (Mouse-ear cress).